Consider the following 596-residue polypeptide: Probable ABC transporter ECU01_0200/ECU01_1410 (596 aa).

Helical transmembrane passes span 26 to 46 (ALMA…VMSI), 173 to 193 (LVPI…MLRI), and 289 to 309 (LSVL…LGGI). An ABC transmembrane type-1 domain is found at 39–318 (KWFDVMSIKR…IARDLGFWLT (280 aa)). Residues 361–593 (VEFDDVSFAY…RGMYWRMKTA (233 aa)) enclose the ABC transporter domain. ATP is bound by residues Y370 and 400–411 (GRPGSGKSTILR).

This sequence belongs to the ABC transporter superfamily. ABCB family. Heavy Metal importer (TC 3.A.1.210) subfamily.

The protein resides in the membrane. The chain is Probable ABC transporter ECU01_0200/ECU01_1410 from Encephalitozoon cuniculi (strain GB-M1) (Microsporidian parasite).